The sequence spans 475 residues: Ribulose bisphosphate carboxylase large chain (475 aa).

Positions 1–2 are excised as a propeptide; the sequence is MS. Pro-3 carries the N-acetylproline modification. At Lys-14 the chain carries N6,N6,N6-trimethyllysine. The substrate site is built by Asn-123 and Thr-173. Lys-175 serves as the catalytic Proton acceptor. Lys-177 is a substrate binding site. The Mg(2+) site is built by Lys-201, Asp-203, and Glu-204. Position 201 is an N6-carboxylysine (Lys-201). The Proton acceptor role is filled by His-294. Substrate is bound by residues Arg-295, His-327, and Ser-379.

Belongs to the RuBisCO large chain family. Type I subfamily. As to quaternary structure, heterohexadecamer of 8 large chains and 8 small chains; disulfide-linked. The disulfide link is formed within the large subunit homodimers. It depends on Mg(2+) as a cofactor. In terms of processing, the disulfide bond which can form in the large chain dimeric partners within the hexadecamer appears to be associated with oxidative stress and protein turnover.

The protein localises to the plastid. It is found in the chloroplast. It catalyses the reaction 2 (2R)-3-phosphoglycerate + 2 H(+) = D-ribulose 1,5-bisphosphate + CO2 + H2O. The catalysed reaction is D-ribulose 1,5-bisphosphate + O2 = 2-phosphoglycolate + (2R)-3-phosphoglycerate + 2 H(+). Functionally, ruBisCO catalyzes two reactions: the carboxylation of D-ribulose 1,5-bisphosphate, the primary event in carbon dioxide fixation, as well as the oxidative fragmentation of the pentose substrate in the photorespiration process. Both reactions occur simultaneously and in competition at the same active site. This is Ribulose bisphosphate carboxylase large chain from Pinus balfouriana (Foxtail pine).